Reading from the N-terminus, the 330-residue chain is Ribosomal RNA small subunit methyltransferase C (330 aa).

The protein belongs to the methyltransferase superfamily. RsmC family. In terms of assembly, monomer.

It localises to the cytoplasm. It carries out the reaction guanosine(1207) in 16S rRNA + S-adenosyl-L-methionine = N(2)-methylguanosine(1207) in 16S rRNA + S-adenosyl-L-homocysteine + H(+). Its function is as follows. Specifically methylates the guanine in position 1207 of 16S rRNA in the 30S particle. In Haemophilus influenzae (strain PittGG), this protein is Ribosomal RNA small subunit methyltransferase C.